A 61-amino-acid chain; its full sequence is Small ribosomal subunit protein uS14 (61 aa).

Residues Cys-24, Cys-27, Cys-40, and Cys-43 each contribute to the Zn(2+) site.

This sequence belongs to the universal ribosomal protein uS14 family. Zinc-binding uS14 subfamily. As to quaternary structure, part of the 30S ribosomal subunit. Contacts proteins S3 and S10. The cofactor is Zn(2+).

Its function is as follows. Binds 16S rRNA, required for the assembly of 30S particles and may also be responsible for determining the conformation of the 16S rRNA at the A site. In Geobacillus thermodenitrificans (strain NG80-2), this protein is Small ribosomal subunit protein uS14.